A 129-amino-acid chain; its full sequence is Fluoride-specific ion channel FluC 2 (129 aa).

Helical transmembrane passes span 3 to 23 (FLYV…MNLW), 32 to 52 (ATLA…RFLA), 59 to 79 (LVLL…FSAF), and 90 to 110 (GAWL…LIMV). Na(+)-binding residues include Gly-71 and Thr-74.

This sequence belongs to the fluoride channel Fluc/FEX (TC 1.A.43) family.

It localises to the cell membrane. It catalyses the reaction fluoride(in) = fluoride(out). With respect to regulation, na(+) is not transported, but it plays an essential structural role and its presence is essential for fluoride channel function. Fluoride-specific ion channel. Important for reducing fluoride concentration in the cell, thus reducing its toxicity. The chain is Fluoride-specific ion channel FluC 2 from Listeria monocytogenes serovar 1/2a (strain ATCC BAA-679 / EGD-e).